Here is a 360-residue protein sequence, read N- to C-terminus: MTELVTLETQLMAEVAAATDEQSIEAVRVAALGKKGSVSELLKTLGSMSPEERQTRGAAINALKNSVTDAINARKGALKDAAIDAKLKAETVDVSLPVRSSPAERGRIHPISQIVDEITAIFGDMGFSIAEGPDVETDYYNFTALNFPEGHPAREMHDTFFFQPDEKGERKVLRTHTSPVQIRTMEAQKPPIRIIIPGKTYRQDSDATHSPMFHQVEGLVIDKTANVANIRWVLEEFCKTFFEVDNVTMRFRPSFFPFTEPSFEVDIQCDRSGPIVKFGEGTDWMEILGCGMVHPNVLRHGGLDPDEYQGFAWGMGLDRIAMLKYGMPDLRDFFNADVRWMNHYGFRPLDMPTLFGGLSA.

Residue Glu260 participates in Mg(2+) binding.

It belongs to the class-II aminoacyl-tRNA synthetase family. Phe-tRNA synthetase alpha subunit type 1 subfamily. In terms of assembly, tetramer of two alpha and two beta subunits. Requires Mg(2+) as cofactor.

The protein localises to the cytoplasm. The enzyme catalyses tRNA(Phe) + L-phenylalanine + ATP = L-phenylalanyl-tRNA(Phe) + AMP + diphosphate + H(+). In Rhizobium rhizogenes (strain K84 / ATCC BAA-868) (Agrobacterium radiobacter), this protein is Phenylalanine--tRNA ligase alpha subunit.